A 348-amino-acid chain; its full sequence is Putative olfactory receptor 3A4 (348 aa).

Residues Met1 to Pro28 lie on the Extracellular side of the membrane. A glycan (N-linked (GlcNAc...) asparagine) is linked at Asn8. A helical transmembrane segment spans residues Ile29 to Ile52. At Leu53 to Ser60 the chain is on the cytoplasmic side. A helical transmembrane segment spans residues Pro61–Pro82. The Extracellular segment spans residues Ala83–Glu103. Cysteines 100 and 192 form a disulfide. Residues Leu104 to Tyr123 traverse the membrane as a helical segment. Residues Asp124–Ile143 are Cytoplasmic-facing. Residues Gln144–Thr161 form a helical membrane-spanning segment. Residues Gln162–Gly199 lie on the Extracellular side of the membrane. A helical membrane pass occupies residues Gln200 to Ala222. Residues His223–Lys239 are Cytoplasmic-facing. The helical transmembrane segment at Ala240 to Tyr262 threads the bilayer. Topologically, residues Thr263–Lys275 are extracellular. A helical transmembrane segment spans residues Gly276–Thr295. Residues Ser296–Leu348 lie on the Cytoplasmic side of the membrane.

Belongs to the G-protein coupled receptor 1 family.

The protein resides in the cell membrane. Functionally, odorant receptor. This chain is Putative olfactory receptor 3A4 (OR3A4P), found in Homo sapiens (Human).